Here is a 135-residue protein sequence, read N- to C-terminus: Single-stranded DNA-binding protein RIM1, mitochondrial (135 aa).

A mitochondrion-targeting transit peptide spans 1–17; the sequence is MFLRTQARFFHATTKKM. One can recognise an SSB domain in the interval 19-117; it reads FSKMSIVGRI…LVQKDINLLK (99 aa).

In terms of assembly, homotetramer. Interacts with PIF1.

It localises to the mitochondrion. Its function is as follows. This protein binds preferentially and cooperatively to single-stranded DNA (ssDNS). Involved in mitochondrial DNA replication. Stimulates PIF1 helicase activity. The polypeptide is Single-stranded DNA-binding protein RIM1, mitochondrial (RIM1) (Saccharomyces cerevisiae (strain ATCC 204508 / S288c) (Baker's yeast)).